We begin with the raw amino-acid sequence, 263 residues long: 7beta-hydroxysteroid dehydrogenase (263 aa).

Residues 17–21 (TEGVG), 40–41 (RR), and 66–67 (DF) each bind NADP(+). The active-site Proton acceptor is the Tyr156. Residue Ser240 participates in NADP(+) binding.

This sequence belongs to the short-chain dehydrogenases/reductases (SDR) family. Homodimer.

The catalysed reaction is a 7beta-hydroxysteroid + NADP(+) = a 7-oxosteroid + NADPH + H(+). It catalyses the reaction 7-oxolithocholate + NADPH + H(+) = ursodeoxycholate + NADP(+). The enzyme catalyses 7beta-hydroxy-3,12-dioxo-5beta-cholan-24-oate + NADP(+) = dehydrocholate + NADPH + H(+). It carries out the reaction ursocholate + NADP(+) = 3alpha,12alpha-dihydroxy-7-oxo-5beta-cholanate + NADPH + H(+). Functionally, 7beta-hydroxysteroid dehydrogenase that catalyzes the reduction of the 7-oxo group of 7-oxo-lithocholate (7-oxo-LCA), to yield ursodeoxycholate (UDCA). As C.aerofaciens is an intestinal bacterium, this enzyme probably contributes to the formation of UDCA in the human colon. UDCA is regarded as a chemopreventive beneficial secondary bile acid due to its low hydrophobicity; it protects hepatocytes and bile duct epithelial cells against necrosis and apoptosis induced by more hydrophobic secondary bile acids like deoxycholate (DCA). This enzyme is also able to catalyze the reverse reaction, i.e. the oxidation of the 7beta-hydroxy group of UDCA to 7-oxo-LCA. To a lesser extent, is also active on the taurine- and glycine-conjugates of ursodeoxycholate. It is specific for NADPH/NADP(+) as the electron acceptor/donor since it is not active with NADH/NAD(+). In the presence of NADPH, 7beta-HSDH can also reduce dehydrocholate. And is also able to oxidize ursocholate. This chain is 7beta-hydroxysteroid dehydrogenase, found in Collinsella aerofaciens (strain ATCC 25986 / DSM 3979 / JCM 10188 / KCTC 3647 / NCTC 11838 / VPI 1003).